The following is a 158-amino-acid chain: Endoribonuclease YbeY (158 aa).

3 residues coordinate Zn(2+): His119, His123, and His129.

It belongs to the endoribonuclease YbeY family. The cofactor is Zn(2+).

The protein localises to the cytoplasm. Functionally, single strand-specific metallo-endoribonuclease involved in late-stage 70S ribosome quality control and in maturation of the 3' terminus of the 16S rRNA. This is Endoribonuclease YbeY from Shewanella woodyi (strain ATCC 51908 / MS32).